The chain runs to 115 residues: Large ribosomal subunit protein bL20 (115 aa).

This sequence belongs to the bacterial ribosomal protein bL20 family.

Functionally, binds directly to 23S ribosomal RNA and is necessary for the in vitro assembly process of the 50S ribosomal subunit. It is not involved in the protein synthesizing functions of that subunit. The chain is Large ribosomal subunit protein bL20 from Malacoplasma penetrans (strain HF-2) (Mycoplasma penetrans).